The sequence spans 375 residues: Hemolysin BL-binding component (375 aa).

Residues 1-31 (MIKKIPYKLLAVSTLLTITTANVVSPVATFA) form the signal peptide. Residues 232–252 (FNVMKGAILGLPIIGGIIVGV) form a helical membrane-spanning segment.

In terms of assembly, composed of a binding component, B, and two lytic components, L1 and L2. All three subunits act synergically to cause hemolysis.

It is found in the secreted. It localises to the host cell membrane. Cytotoxic protein, part of the enterotoxin complex. Responsible for binding to erythrocytes. This enterotoxin is thought to be the cause of the diarrheal form of gastroenteritis caused by food-borne strains of B.cereus. The polypeptide is Hemolysin BL-binding component (hblA) (Bacillus cereus).